The sequence spans 367 residues: MGWGQVDTVVGETRANVIPLHIKRGRVASRRRAGYRVDGSRQHPSLLSDLRGRASAEQIAAVVREIDEHRRSTGATNLWEVTTEAPLSELAQHVAAVAGFLRQRLTGDYTVDEFGFDPHFNNAIIRPFLRFFFKSWFRVEVSGIENLPSTGGALVVANHAGVLPFDGLMLSLAVHDEHPAQRDLRLLVADMVFDLPVVGEAVRKAGHTVACTSDAHRLLAAGELTAVFPEGYKGLGKRFQDRYRLQRFGRGGFVKAALSTKATIVPCSIVGSEEIYPMLTDVKLLARLFGVPYFPVTPLFPLAGPAGLVPLPSKWRIAFGEPIYTTDYAATDADDPMVTFELTDQVRETIQQTLYRLLAGRRNIFFG.

It to M.tuberculosis Rv0502.

This is an uncharacterized protein from Mycobacterium leprae (strain TN).